The chain runs to 562 residues: Formate--tetrahydrofolate ligase (562 aa).

71-78 (TPAGEGKS) contributes to the ATP binding site.

The protein belongs to the formate--tetrahydrofolate ligase family.

It catalyses the reaction (6S)-5,6,7,8-tetrahydrofolate + formate + ATP = (6R)-10-formyltetrahydrofolate + ADP + phosphate. It participates in one-carbon metabolism; tetrahydrofolate interconversion. This is Formate--tetrahydrofolate ligase from Bacillus thuringiensis (strain Al Hakam).